Here is a 506-residue protein sequence, read N- to C-terminus: MIKIQPEEISSVIRKQIEQYNQEVKVVNIGTVLQVGDGIARIYGLAKVMAGELLEFEDGTIGIALNLESNNVGAVMMGEGLTIQEGSSVKATGKIAQIPVGEAYVGRVVNALARPIDGKGEIPTSEYRLLESPAPGIISRRSVYEPLQTGLVAIDAMIPIGRGQRELIIGDRQTGKTAVATDTILNQKGQNVICVYVAIGQKASSVAQVVNTLEERGAMEYTIVVAENANAPATLQYLAPYTGATLAEYFMYKGRHTLVIYDDLSKQAQAYREMSLLLRRPPGREAYPGDVFYLHSRLLERAAKLSTALGEGSMTALPVVETQAGDVSAYIPTNVISITDGQIFLSADLFNAGLRPAINVGISVSRVGSAAQVKAMKQVAGKLKLELAQFAELEAFSQFASDLDKATQNQLARGRRLRELLKQAQAAPLSVEEQVSTIYTGINGYLDSIEVEDVRKFLAGLRGFIAKSYPKVYEIVRTTKTFTTEAEDLLKEAINEYKKNFSATAA.

170 to 177 (GDRQTGKT) is a binding site for ATP.

The protein belongs to the ATPase alpha/beta chains family. As to quaternary structure, F-type ATPases have 2 components, CF(1) - the catalytic core - and CF(0) - the membrane proton channel. CF(1) has five subunits: alpha(3), beta(3), gamma(1), delta(1), epsilon(1). CF(0) has four main subunits: a, b, b' and c.

Its subcellular location is the plastid. It is found in the chloroplast thylakoid membrane. The catalysed reaction is ATP + H2O + 4 H(+)(in) = ADP + phosphate + 5 H(+)(out). Its function is as follows. Produces ATP from ADP in the presence of a proton gradient across the membrane. The alpha chain is a regulatory subunit. The chain is ATP synthase subunit alpha, chloroplastic from Chlorokybus atmophyticus (Soil alga).